The primary structure comprises 544 residues: T-complex protein 1 subunit gamma (544 aa).

An intrachain disulfide couples Cys368 to Cys374. A disordered region spans residues 525 to 544; sequence SKKRGGNEPTNPAAMAQGQE.

It belongs to the TCP-1 chaperonin family. As to quaternary structure, heterooligomeric complex of about 850 to 900 kDa that forms two stacked rings, 12 to 16 nm in diameter.

It is found in the cytoplasm. In terms of biological role, molecular chaperone; assists the folding of proteins upon ATP hydrolysis. Known to play a role, in vitro, in the folding of actin and tubulin. The chain is T-complex protein 1 subunit gamma from Drosophila melanogaster (Fruit fly).